The sequence spans 750 residues: Serine/threonine-protein kinase PknG (750 aa).

The tract at residues 1-66 (MAKASETERS…PQDRMATTSR (66 aa)) is disordered. Residues 17–34 (ADAQTATSATVRPLSTQA) are compositionally biased toward polar residues. A Protein kinase domain is found at 151 to 396 (YEVKGCIAHG…EMSAQLTGVL (246 aa)). ATP-binding positions include 157 to 165 (IAHGGLGWI) and lysine 181. The active-site Proton acceptor is aspartate 276.

The protein belongs to the protein kinase superfamily. Ser/Thr protein kinase family. In terms of processing, autophosphorylated.

The catalysed reaction is L-seryl-[protein] + ATP = O-phospho-L-seryl-[protein] + ADP + H(+). The enzyme catalyses L-threonyl-[protein] + ATP = O-phospho-L-threonyl-[protein] + ADP + H(+). This is Serine/threonine-protein kinase PknG (pknG) from Mycobacterium bovis (strain ATCC BAA-935 / AF2122/97).